The primary structure comprises 286 residues: Beta-lactamase SHV-8 (286 aa).

An N-terminal signal peptide occupies residues 1 to 21; it reads MRYIRLCIISLLATLPLAVHA. Ser66 functions as the Acyl-ester intermediate in the catalytic mechanism. Cys73 and Cys119 form a disulfide bridge. The active-site Proton acceptor is Glu164. 230–232 is a binding site for substrate; that stretch reads KTG.

It belongs to the class-A beta-lactamase family.

The catalysed reaction is a beta-lactam + H2O = a substituted beta-amino acid. In terms of biological role, SHV enzymes hydrolyze broad spectrum cephalosporins notably cefotaxime and ceftazidime. The sequence is that of Beta-lactamase SHV-8 (bla) from Escherichia coli.